The primary structure comprises 364 residues: Small ribosomal subunit biogenesis GTPase RsgA (364 aa).

Residues 101–264 (KGLVEKPGVP…VIDTPGLREL (164 aa)) enclose the CP-type G domain. GTP contacts are provided by residues 154–157 (NKSD) and 206–214 (GSSGAGKST). Residues Cys288, Cys293, His295, and Cys301 each coordinate Zn(2+). Residues 339–364 (QVAQKRKRKTIPRQGKRWRREHGDGQ) form a disordered region. Residues 342 to 358 (QKRKRKTIPRQGKRWRR) show a composition bias toward basic residues.

The protein belongs to the TRAFAC class YlqF/YawG GTPase family. RsgA subfamily. In terms of assembly, monomer. Associates with 30S ribosomal subunit, binds 16S rRNA. Zn(2+) serves as cofactor.

Its subcellular location is the cytoplasm. In terms of biological role, one of several proteins that assist in the late maturation steps of the functional core of the 30S ribosomal subunit. Helps release RbfA from mature subunits. May play a role in the assembly of ribosomal proteins into the subunit. Circularly permuted GTPase that catalyzes slow GTP hydrolysis, GTPase activity is stimulated by the 30S ribosomal subunit. This Syntrophotalea carbinolica (strain DSM 2380 / NBRC 103641 / GraBd1) (Pelobacter carbinolicus) protein is Small ribosomal subunit biogenesis GTPase RsgA.